A 716-amino-acid chain; its full sequence is Fatty acid oxidation complex subunit alpha (716 aa).

The interval 1 to 189 (MIYQSPTIQV…KVGAVDSVVA (189 aa)) is enoyl-CoA hydratase/isomerase. Residue Asp296 coordinates substrate. The interval 311–716 (KEVNNAAVLG…AANNGSYYQA (406 aa)) is 3-hydroxyacyl-CoA dehydrogenase. Residues Met324, Asp343, 400-402 (VVE), Lys407, and Ser429 contribute to the NAD(+) site. His450 functions as the For 3-hydroxyacyl-CoA dehydrogenase activity in the catalytic mechanism. Residue Asn453 coordinates NAD(+). 2 residues coordinate substrate: Asn500 and Tyr660.

The protein in the N-terminal section; belongs to the enoyl-CoA hydratase/isomerase family. It in the C-terminal section; belongs to the 3-hydroxyacyl-CoA dehydrogenase family. As to quaternary structure, heterotetramer of two alpha chains (FadB) and two beta chains (FadA).

The enzyme catalyses a (3S)-3-hydroxyacyl-CoA + NAD(+) = a 3-oxoacyl-CoA + NADH + H(+). The catalysed reaction is a (3S)-3-hydroxyacyl-CoA = a (2E)-enoyl-CoA + H2O. It catalyses the reaction a 4-saturated-(3S)-3-hydroxyacyl-CoA = a (3E)-enoyl-CoA + H2O. It carries out the reaction (3S)-3-hydroxybutanoyl-CoA = (3R)-3-hydroxybutanoyl-CoA. The enzyme catalyses a (3Z)-enoyl-CoA = a 4-saturated (2E)-enoyl-CoA. The catalysed reaction is a (3E)-enoyl-CoA = a 4-saturated (2E)-enoyl-CoA. The protein operates within lipid metabolism; fatty acid beta-oxidation. Its function is as follows. Involved in the aerobic and anaerobic degradation of long-chain fatty acids via beta-oxidation cycle. Catalyzes the formation of 3-oxoacyl-CoA from enoyl-CoA via L-3-hydroxyacyl-CoA. It can also use D-3-hydroxyacyl-CoA and cis-3-enoyl-CoA as substrate. The protein is Fatty acid oxidation complex subunit alpha of Shewanella baltica (strain OS185).